The sequence spans 179 residues: Large ribosomal subunit protein uL5 (179 aa).

This sequence belongs to the universal ribosomal protein uL5 family. In terms of assembly, part of the 50S ribosomal subunit; part of the 5S rRNA/L5/L18/L25 subcomplex. Contacts the 5S rRNA and the P site tRNA. Forms a bridge to the 30S subunit in the 70S ribosome.

Functionally, this is one of the proteins that bind and probably mediate the attachment of the 5S RNA into the large ribosomal subunit, where it forms part of the central protuberance. In the 70S ribosome it contacts protein S13 of the 30S subunit (bridge B1b), connecting the 2 subunits; this bridge is implicated in subunit movement. Contacts the P site tRNA; the 5S rRNA and some of its associated proteins might help stabilize positioning of ribosome-bound tRNAs. This Synechococcus sp. (strain CC9605) protein is Large ribosomal subunit protein uL5.